The chain runs to 140 residues: Large ribosomal subunit protein bL17 (140 aa).

Belongs to the bacterial ribosomal protein bL17 family. In terms of assembly, part of the 50S ribosomal subunit. Contacts protein L32.

The protein is Large ribosomal subunit protein bL17 of Rhizobium rhizogenes (strain K84 / ATCC BAA-868) (Agrobacterium radiobacter).